Reading from the N-terminus, the 274-residue chain is Protein TIC 20-I, chloroplastic (274 aa).

Residues 1–65 (MITGYSTPSA…ELPRVSRGVP (65 aa)) constitute a chloroplast transit peptide. Helical transmembrane passes span 130 to 152 (LPYL…LHPF), 167 to 187 (IGRL…LGIV), 200 to 220 (VVMG…SKWM), and 229 to 249 (FGMH…LESI).

Belongs to the Tic20 family. As to quaternary structure, part of the Tic complex. Component of the 1-MD complex, composed of TIC20-I, TIC214, TIC100 and TIC56. Interacts with the translocating preproteins. Hydrolysis of ATP is essential for the formation of this complex. The 1-MD complex interacts with TIC21. Expressed in leaves, shoots and roots. High expression in mature photosynthetic tissues. Lower levels in non-photosynthetic tissues and roots.

It localises to the plastid. It is found in the chloroplast inner membrane. Involved in protein precursor import into chloroplasts. May be part of an intermediate translocation complex acting as a protein-conducting channel at the inner envelope. Seems to be specific for photosynthesis-related pre-proteins. Partially redundant with TIC20-IV, but not with TIC20-II or TIC20-V. The chain is Protein TIC 20-I, chloroplastic from Arabidopsis thaliana (Mouse-ear cress).